The chain runs to 136 residues: Psoriasis susceptibility 1 candidate gene 2 protein (136 aa).

The N-terminal stretch at 1-22 (MILNWKLLGILVLCLHTRGISG) is a signal peptide. Residues 20–136 (ISGSEGHPSH…DLDPPREEYR (117 aa)) are disordered. Composition is skewed to pro residues over residues 44-69 (PQGP…PTRP) and 84-116 (PEPP…PPAP). A compositionally biased stretch (basic and acidic residues) spans 118–136 (VDNRPQEEPDLDPPREEYR).

In terms of tissue distribution, expressed in skin. Also expressed in heart and skeletal muscle.

It is found in the secreted. This Homo sapiens (Human) protein is Psoriasis susceptibility 1 candidate gene 2 protein (PSORS1C2).